Reading from the N-terminus, the 188-residue chain is Acireductone dioxygenase (188 aa).

A disordered region spans residues 1–20 (MSRLRIFADSNPTTPHFDSR). Residues histidine 97, histidine 99, glutamate 103, and histidine 141 each contribute to the Fe(2+) site. The Ni(2+) site is built by histidine 97, histidine 99, glutamate 103, and histidine 141.

Belongs to the acireductone dioxygenase (ARD) family. In terms of assembly, monomer. It depends on Fe(2+) as a cofactor. Requires Ni(2+) as cofactor.

The catalysed reaction is 1,2-dihydroxy-5-(methylsulfanyl)pent-1-en-3-one + O2 = 3-(methylsulfanyl)propanoate + CO + formate + 2 H(+). The enzyme catalyses 1,2-dihydroxy-5-(methylsulfanyl)pent-1-en-3-one + O2 = 4-methylsulfanyl-2-oxobutanoate + formate + 2 H(+). It functions in the pathway amino-acid biosynthesis; L-methionine biosynthesis via salvage pathway; L-methionine from S-methyl-5-thio-alpha-D-ribose 1-phosphate: step 5/6. Functionally, catalyzes 2 different reactions between oxygen and the acireductone 1,2-dihydroxy-3-keto-5-methylthiopentene (DHK-MTPene) depending upon the metal bound in the active site. Fe-containing acireductone dioxygenase (Fe-ARD) produces formate and 2-keto-4-methylthiobutyrate (KMTB), the alpha-ketoacid precursor of methionine in the methionine recycle pathway. Ni-containing acireductone dioxygenase (Ni-ARD) produces methylthiopropionate, carbon monoxide and formate, and does not lie on the methionine recycle pathway. The polypeptide is Acireductone dioxygenase (Xanthomonas campestris pv. campestris (strain 8004)).